A 367-amino-acid polypeptide reads, in one-letter code: Probable L-aspartate decarboxylase (367 aa).

K216 carries the N6-(pyridoxal phosphate)lysine modification.

This sequence belongs to the group II decarboxylase family. MfnA subfamily. The cofactor is pyridoxal 5'-phosphate.

The enzyme catalyses L-aspartate + H(+) = beta-alanine + CO2. The protein operates within cofactor biosynthesis; coenzyme A biosynthesis. Catalyzes the decarboxylation of L-aspartate to produce beta-alanine. This is Probable L-aspartate decarboxylase from Archaeoglobus fulgidus (strain ATCC 49558 / DSM 4304 / JCM 9628 / NBRC 100126 / VC-16).